Consider the following 32-residue polypeptide: Cytochrome b6-f complex subunit 7 (32 aa).

Residues 9–27 (AALFWVLIPLGLAGGALLL) form a helical membrane-spanning segment.

This sequence belongs to the PetM family. The 4 large subunits of the cytochrome b6-f complex are cytochrome b6, subunit IV (17 kDa polypeptide, PetD), cytochrome f and the Rieske protein, while the 4 small subunits are PetG, PetL, PetM and PetN. The complex functions as a dimer.

It localises to the cellular thylakoid membrane. Its function is as follows. Component of the cytochrome b6-f complex, which mediates electron transfer between photosystem II (PSII) and photosystem I (PSI), cyclic electron flow around PSI, and state transitions. The sequence is that of Cytochrome b6-f complex subunit 7 from Synechococcus sp. (strain RCC307).